Reading from the N-terminus, the 551-residue chain is Chaperonin GroEL (551 aa).

Residues 29–32, Lys-50, 86–90, Gly-414, 478–480, and Asp-494 each bind ATP; these read TMGP, DGTTT, and NAA.

It belongs to the chaperonin (HSP60) family. As to quaternary structure, forms a cylinder of 14 subunits composed of two heptameric rings stacked back-to-back. Interacts with the co-chaperonin GroES.

It is found in the cytoplasm. It catalyses the reaction ATP + H2O + a folded polypeptide = ADP + phosphate + an unfolded polypeptide.. Functionally, together with its co-chaperonin GroES, plays an essential role in assisting protein folding. The GroEL-GroES system forms a nano-cage that allows encapsulation of the non-native substrate proteins and provides a physical environment optimized to promote and accelerate protein folding. The sequence is that of Chaperonin GroEL from Legionella jeonii.